The following is a 180-amino-acid chain: Large ribosomal subunit protein uL5 (180 aa).

It belongs to the universal ribosomal protein uL5 family. As to quaternary structure, part of the 50S ribosomal subunit; part of the 5S rRNA/L5/L18/L25 subcomplex. Contacts the 5S rRNA and the P site tRNA. Forms a bridge to the 30S subunit in the 70S ribosome.

This is one of the proteins that bind and probably mediate the attachment of the 5S RNA into the large ribosomal subunit, where it forms part of the central protuberance. In the 70S ribosome it contacts protein S13 of the 30S subunit (bridge B1b), connecting the 2 subunits; this bridge is implicated in subunit movement. Contacts the P site tRNA; the 5S rRNA and some of its associated proteins might help stabilize positioning of ribosome-bound tRNAs. This chain is Large ribosomal subunit protein uL5, found in Anaeromyxobacter dehalogenans (strain 2CP-1 / ATCC BAA-258).